The following is a 137-amino-acid chain: Large ribosomal subunit protein uL16 (137 aa).

This sequence belongs to the universal ribosomal protein uL16 family. In terms of assembly, part of the 50S ribosomal subunit.

Its function is as follows. Binds 23S rRNA and is also seen to make contacts with the A and possibly P site tRNAs. The sequence is that of Large ribosomal subunit protein uL16 from Streptococcus uberis (strain ATCC BAA-854 / 0140J).